We begin with the raw amino-acid sequence, 147 residues long: uncharacterized protein (147 aa).

A helical transmembrane segment spans residues I71–F91.

It localises to the virion. Its subcellular location is the host membrane. This is an uncharacterized protein from Acanthamoeba polyphaga mimivirus (APMV).